We begin with the raw amino-acid sequence, 287 residues long: Pyridoxal kinase PdxY (287 aa).

Residues S10 and 45-46 each bind substrate; that span reads TQ. ATP-binding positions include D112, A144, E149, K182, and 209-212; that span reads RPLV. D224 is a substrate binding site.

This sequence belongs to the pyridoxine kinase family. PdxY subfamily. As to quaternary structure, homodimer. Requires Mg(2+) as cofactor.

The catalysed reaction is pyridoxal + ATP = pyridoxal 5'-phosphate + ADP + H(+). It participates in cofactor metabolism; pyridoxal 5'-phosphate salvage; pyridoxal 5'-phosphate from pyridoxal: step 1/1. Its function is as follows. Pyridoxal kinase involved in the salvage pathway of pyridoxal 5'-phosphate (PLP). Catalyzes the phosphorylation of pyridoxal to PLP. In Escherichia coli O157:H7, this protein is Pyridoxal kinase PdxY.